The primary structure comprises 245 residues: 3-deoxy-manno-octulosonate cytidylyltransferase (245 aa).

The protein belongs to the KdsB family.

Its subcellular location is the cytoplasm. It catalyses the reaction 3-deoxy-alpha-D-manno-oct-2-ulosonate + CTP = CMP-3-deoxy-beta-D-manno-octulosonate + diphosphate. It participates in nucleotide-sugar biosynthesis; CMP-3-deoxy-D-manno-octulosonate biosynthesis; CMP-3-deoxy-D-manno-octulosonate from 3-deoxy-D-manno-octulosonate and CTP: step 1/1. The protein operates within bacterial outer membrane biogenesis; lipopolysaccharide biosynthesis. Activates KDO (a required 8-carbon sugar) for incorporation into bacterial lipopolysaccharide in Gram-negative bacteria. This Elusimicrobium minutum (strain Pei191) protein is 3-deoxy-manno-octulosonate cytidylyltransferase.